The sequence spans 544 residues: CTP synthase (544 aa).

Residues 1 to 265 (MTKFIFVTGG…DNIITEQLQL (265 aa)) form an amidoligase domain region. Residue S13 participates in CTP binding. S13 provides a ligand contact to UTP. ATP is bound by residues 14–19 (SLGKGI) and D71. Positions 71 and 139 each coordinate Mg(2+). CTP-binding positions include 146 to 148 (DIE), 186 to 191 (KTKPTQ), and K222. Residues 186–191 (KTKPTQ) and K222 each bind UTP. One can recognise a Glutamine amidotransferase type-1 domain in the interval 290–544 (KIAMVGKYVD…VKAALNNKKA (255 aa)). G353 contributes to the L-glutamine binding site. C380 acts as the Nucleophile; for glutamine hydrolysis in catalysis. L-glutamine is bound by residues 381–384 (LGMQ), E404, and R471. Active-site residues include H517 and E519.

The protein belongs to the CTP synthase family. In terms of assembly, homotetramer.

It catalyses the reaction UTP + L-glutamine + ATP + H2O = CTP + L-glutamate + ADP + phosphate + 2 H(+). The catalysed reaction is L-glutamine + H2O = L-glutamate + NH4(+). The enzyme catalyses UTP + NH4(+) + ATP = CTP + ADP + phosphate + 2 H(+). It participates in pyrimidine metabolism; CTP biosynthesis via de novo pathway; CTP from UDP: step 2/2. With respect to regulation, allosterically activated by GTP, when glutamine is the substrate; GTP has no effect on the reaction when ammonia is the substrate. The allosteric effector GTP functions by stabilizing the protein conformation that binds the tetrahedral intermediate(s) formed during glutamine hydrolysis. Inhibited by the product CTP, via allosteric rather than competitive inhibition. Catalyzes the ATP-dependent amination of UTP to CTP with either L-glutamine or ammonia as the source of nitrogen. Regulates intracellular CTP levels through interactions with the four ribonucleotide triphosphates. The sequence is that of CTP synthase from Neisseria gonorrhoeae (strain ATCC 700825 / FA 1090).